Reading from the N-terminus, the 174-residue chain is Shikimate kinase 2 (174 aa).

12–17 (GCGKTT) serves as a coordination point for ATP. Mg(2+) contacts are provided by Thr16 and Asp32. Positions 34, 58, and 79 each coordinate substrate. The interval 112–126 (EAFPEEGQRPTLTGK) is LID domain. Residue Arg120 participates in ATP binding. Arg139 contacts substrate. ATP is bound at residue Gln155.

The protein belongs to the shikimate kinase family. AroL subfamily. In terms of assembly, monomer. The cofactor is Mg(2+).

The protein resides in the cytoplasm. It catalyses the reaction shikimate + ATP = 3-phosphoshikimate + ADP + H(+). It functions in the pathway metabolic intermediate biosynthesis; chorismate biosynthesis; chorismate from D-erythrose 4-phosphate and phosphoenolpyruvate: step 5/7. Functionally, catalyzes the specific phosphorylation of the 3-hydroxyl group of shikimic acid using ATP as a cosubstrate. This is Shikimate kinase 2 from Enterobacter sp. (strain 638).